The primary structure comprises 70 residues: Mu-conotoxin-like Am3.4 (70 aa).

A signal peptide spans 1–20 (MMYKLGVLLIICLLLFPLTA). Residues 21-53 (VPQDGDQPADRPAERMQDDISFEHDRFFDPVKR) constitute a propeptide that is removed on maturation. 3 disulfide bridges follow: C54–C69, C55–C65, and C61–C68. P67 bears the 4-hydroxyproline; partial; in major form mark. A Cysteine amide modification is found at C69.

Belongs to the conotoxin M superfamily. Post-translationally, contains 3 disulfide bonds. Expressed by the venom duct.

It is found in the secreted. Functionally, mu-conotoxins block voltage-gated sodium channels (Nav). The polypeptide is Mu-conotoxin-like Am3.4 (Conus amadis (Amadis cone)).